Reading from the N-terminus, the 119-residue chain is MPRVKRGVTARARHKKVLDQAKGYRGRRSKVYRIAKQAVMRAGQYAYRDRRNKKRVFRALWITRINAASREHGLTYSVFMNGLKRASIELDRKVLADMAVMDKPAFAAIVNQVKTTIAA.

Belongs to the bacterial ribosomal protein bL20 family.

Functionally, binds directly to 23S ribosomal RNA and is necessary for the in vitro assembly process of the 50S ribosomal subunit. It is not involved in the protein synthesizing functions of that subunit. This is Large ribosomal subunit protein bL20 from Herminiimonas arsenicoxydans.